The following is a 281-amino-acid chain: Ribosomal RNA small subunit methyltransferase A (281 aa).

The S-adenosyl-L-methionine site is built by N36, L38, G63, E84, D109, and N127.

The protein belongs to the class I-like SAM-binding methyltransferase superfamily. rRNA adenine N(6)-methyltransferase family. RsmA subfamily.

It localises to the cytoplasm. It carries out the reaction adenosine(1518)/adenosine(1519) in 16S rRNA + 4 S-adenosyl-L-methionine = N(6)-dimethyladenosine(1518)/N(6)-dimethyladenosine(1519) in 16S rRNA + 4 S-adenosyl-L-homocysteine + 4 H(+). In terms of biological role, specifically dimethylates two adjacent adenosines (A1518 and A1519) in the loop of a conserved hairpin near the 3'-end of 16S rRNA in the 30S particle. May play a critical role in biogenesis of 30S subunits. This is Ribosomal RNA small subunit methyltransferase A from Borreliella afzelii (strain PKo) (Borrelia afzelii).